The following is a 1005-amino-acid chain: DNA double-strand break repair Rad50 ATPase (1005 aa).

Residues Lys14, 35 to 40, 62 to 64, and Gln134 contribute to the ATP site; these read GSGKSS and ITK. Coiled-coil stretches lie at residues 189–230, 292–321, 346–379, and 404–498; these read KENY…IEKL, LVDE…KQLE, LDTL…EIEK, and AVEY…LKEV. Residues 457-554 form the Zinc-hook domain; the sequence is IEEKKKVLEN…DIEKLKKEID (98 aa). The Zn(2+) site is built by Cys502 and Cys505. 3 coiled-coil regions span residues 523 to 600, 656 to 692, and 800 to 834; these read TQLN…YVIN, KEKC…ELIE, and RQEL…LKEM.

This sequence belongs to the SMC family. RAD50 subfamily. As to quaternary structure, homodimer. Forms a heterotetramer composed of two Mre11 subunits and two Rad50 subunits. Zn(2+) is required as a cofactor.

In terms of biological role, part of the Rad50/Mre11 complex, which is involved in the early steps of DNA double-strand break (DSB) repair. The complex may facilitate opening of the processed DNA ends to aid in the recruitment of HerA and NurA. Rad50 controls the balance between DNA end bridging and DNA resection via ATP-dependent structural rearrangements of the Rad50/Mre11 complex. The sequence is that of DNA double-strand break repair Rad50 ATPase from Methanocaldococcus jannaschii (strain ATCC 43067 / DSM 2661 / JAL-1 / JCM 10045 / NBRC 100440) (Methanococcus jannaschii).